A 277-amino-acid polypeptide reads, in one-letter code: Large ribosomal subunit protein uL2 (277 aa).

2 disordered regions span residues 36 to 58 (PLHK…GGGH) and 219 to 277 (TVRG…RKNK). A compositionally biased stretch (basic residues) spans 258 to 277 (KTRKKKNKSDKFIVRRRKNK).

The protein belongs to the universal ribosomal protein uL2 family. Part of the 50S ribosomal subunit. Forms a bridge to the 30S subunit in the 70S ribosome.

Functionally, one of the primary rRNA binding proteins. Required for association of the 30S and 50S subunits to form the 70S ribosome, for tRNA binding and peptide bond formation. It has been suggested to have peptidyltransferase activity; this is somewhat controversial. Makes several contacts with the 16S rRNA in the 70S ribosome. This is Large ribosomal subunit protein uL2 from Bacillus velezensis (strain DSM 23117 / BGSC 10A6 / LMG 26770 / FZB42) (Bacillus amyloliquefaciens subsp. plantarum).